The sequence spans 457 residues: Multidrug resistance protein MdtK (457 aa).

Transmembrane regions (helical) follow at residues 11–31 (LLAL…MGFV), 53–73 (IWLP…PVIA), 93–113 (WLAG…GYII), 127–147 (AVGY…FQVA), 160–180 (GMVM…IFIY), 189–209 (GGVG…LAMV), 243–263 (LPIA…ALLV), 276–296 (IALN…AAVT), 314–334 (AART…IFTV), 350–370 (VVTL…SDSI), 387–407 (IFYI…YILA), and 418–438 (PAGF…MMML).

It belongs to the multi antimicrobial extrusion (MATE) (TC 2.A.66.1) family. MdtK subfamily.

The protein resides in the cell inner membrane. Functionally, multidrug efflux pump that functions probably as a Na(+)/drug antiporter. The protein is Multidrug resistance protein MdtK of Escherichia coli O127:H6 (strain E2348/69 / EPEC).